Consider the following 379-residue polypeptide: Pectin lyase A (379 aa).

Positions 1–20 (MKYSTIFSAAAAVFAGSAAA) are cleaved as a signal peptide. 2 disulfides stabilise this stretch: C83-C102 and C92-C226. Residue T88 is glycosylated (O-linked (Man) threonine). A glycan (N-linked (GlcNAc...) asparagine) is linked at N129. R256 is a catalytic residue. A disulfide bridge connects residues C322 and C330. S368 carries O-linked (Man) serine; in strain 4M-147 glycosylation.

Belongs to the polysaccharide lyase 1 family. In terms of processing, N-glycosylated at Asn-129 and O-glycosylated at Thr-88 when expressed in Aspergillus nidulans. The protein from strain 4M-147 is O-glycosylated at Thr-88 and Ser-368. PubMed:9195887 modeled GalNAc at the O-glycosylation site, a glycosylation not observed in fungi. The O-linked saccharide is probably mannose.

It is found in the secreted. The catalysed reaction is Eliminative cleavage of (1-&gt;4)-alpha-D-galacturonan methyl ester to give oligosaccharides with 4-deoxy-6-O-methyl-alpha-D-galact-4-enuronosyl groups at their non-reducing ends.. Pectinolytic enzymes consist of four classes of enzymes: pectin lyase, polygalacturonase, pectin methylesterase and rhamnogalacturonase. Among pectinolytic enzymes, pectin lyase is the most important in depolymerization of pectin, since it cleaves internal glycosidic bonds of highly methylated pectins. This is Pectin lyase A (pelA) from Aspergillus niger.